The sequence spans 2406 residues: Highly reducing polyketide synthase dmxL2 (2406 aa).

Residues 1–399 (MEAFWSASKK…GTNAHAVLDD (399 aa)) form the Ketosynthase family 3 (KS3) domain. Cys130 is a catalytic residue. The active-site For beta-ketoacyl synthase activity is the Cys130. Residues 414–476 (GHASNGTNGT…GPTDGPTSRP (63 aa)) are disordered. Residues 417–448 (SNGTNGTLTNGHILNGEHTSNGMNGTLTNGHA) show a composition bias toward polar residues. Residues 574–911 (FVFTGQGAQW…LAGSLFTQGY (338 aa)) form a malonyl-CoA:ACP transacylase (MAT) domain region. The active-site For malonyltransferase activity is Ser665. Residues 962-1096 (PSLLGSPSPS…GLLVIEYEAA (135 aa)) are N-terminal hotdog fold. Positions 962–1278 (PSLLGSPSPS…CAEIAGASSN (317 aa)) constitute a PKS/mFAS DH domain. The tract at residues 964–1273 (LLGSPSPSLA…IEGFLCAEIA (310 aa)) is dehydratase (DH) domain. His994 functions as the Proton acceptor; for dehydratase activity in the catalytic mechanism. Positions 1124-1278 (VHRLDPSGFY…CAEIAGASSN (155 aa)) are C-terminal hotdog fold. Asp1189 functions as the Proton donor; for dehydratase activity in the catalytic mechanism. Positions 1694–2006 (GMLGSVCLEP…TGKHLGKIAL (313 aa)) are enoylreductase (ER) domain. The tract at residues 2032 to 2210 (GVYLLVGGLG…TTVDLGIMRD (179 aa)) is ketoreductase (KR) domain. The region spanning 2318-2395 (EASDSVLEAL…TFCNRIAAKS (78 aa)) is the Carrier domain. Residue Ser2355 is modified to O-(pantetheine 4'-phosphoryl)serine.

The protein operates within secondary metabolite biosynthesis. In terms of biological role, highly reducing polyketide synthase; part of the gene cluster that mediates the biosynthesis of the dimeric xanthones cryptosporioptides. The pathway begins with the synthesis of atrochrysone thioester by the polyketide synthase dmx-nrPKS. The atrochrysone carboxyl ACP thioesterase dmxR1 then breaks the thioester bond and releases the atrochrysone carboxylic acid from dmx-nrPKS. Atrochrysone carboxylic acid is decarboxylated by the decarboxylase dmxR15, and oxidized by the anthrone oxygenase dmxR16 to yield emodin. Emodin is then reduced to emodin hydroquinone by the oxidoreductase dmxR7. A-ring reduction by the short chain dehydrogenase dmxR18, dehydration by the scytalone dehydratase-like protein dmxR17 and probable spontaneous re-oxidation, results in overall deoxygenation to chrysophanol. Baeyer-Villiger oxidation by the Baeyer-Villiger monooxygenase (BVMO) dmxR6 then yields monodictylactone in equilibrium with monodictyphenone. In the case of the cryptosporioptides biosynthesis, monodictylactone is reduced at C-12 to an alcohol (by the short chain dehydrogenases dmxR12 or dmxR8) and hydroxylated at C-5 by dmxR9, yielding the electron-rich aromatic which could eliminate H(2)O to form the ortho-quinonemethide, followed by tautomerisation to paraquinone and complete the formal reduction to produce the 10-methylgroup. Conjugate addition of C-4a-OH to the resulting paraquinone by the monooxygenase dmxR10 then gives cyclohexadienone, which is then reduced at C-5 by the short chain dehydrogenase dmxR3 to give the dihydroxanthone. The 6,7-epoxide in the cryptosporioptides could be introduced by the cytochrome P450 monooxygenase dmxL3. The highly reducing PKS dmxL2 manufactures butyrate, which is further carboxylated by dmxL1 to form ethylmalonate. It is not yet clear whether the carboxylation occurs while the butyrate is attached to the ACP of dmxL2, but this unusual fungal metabolite could then be esterified to O-5 by the O-acetyltransferase dmxR13. Finally, dimerization performed by dmxR5 gives the observed dimers cryptosporioptides A, B and C as the final products of the pathway. The sequence is that of Highly reducing polyketide synthase dmxL2 from Cryptosporiopsis sp. (strain 8999).